Consider the following 319-residue polypeptide: F-box only protein 8 (319 aa).

In terms of domain architecture, F-box spans 68-111; it reads FINLEMLPPELSFTILSYLNATDLCLASCVWQDLANDELLWQGL. The SEC7 domain maps to 146-276; the sequence is FNANPDEGVN…LILLSIDLTS (131 aa).

Functionally, may promote guanine-nucleotide exchange on an ARF. Promotes the activation of ARF through replacement of GDP with GTP (Potential). This chain is F-box only protein 8 (FBXO8), found in Homo sapiens (Human).